The sequence spans 397 residues: MSESVHTNTSLWSKGMKAVIVAQFLSAFGDNALLFATLALLKAQFYPEWSQPILQMVFVGAYILFAPFVGQVADSFAKGRVMMFANGLKLLGAASICFGINPFLGYTLVGVGAAAYSPAKYGILGELTTGSKLVKANGLMEASTIAAILLGSVAGGVLADWHVLVALAACALAYGGAVVANIYIPKLAAARPGQSWNLINMTRSFLNACTSLWRNGETRFSLVGTSLFWGAGVTLRFLLVLWVPVALGITDNATPTYLNAMVAIGIVVGAGAAAKLVTLETVSRCMPAGILIGVVVLIFSLQHELLPAYALLMLIGVLGGFFVVPLNALLQERGKKSVGAGNAIAVQNLGENSAMLLMLGIYSLAVMVGIPVVPIGIGFGALFALAITALWIWQRRH.

The Periplasmic segment spans residues M1–K17. Residues A18–L38 traverse the membrane as a helical segment. The Cytoplasmic segment spans residues A39 to P52. Residues I53–A73 form a helical membrane-spanning segment. Residues D74–L90 lie on the Periplasmic side of the membrane. The chain crosses the membrane as a helical span at residues L91–V111. At G112–T144 the chain is on the cytoplasmic side. The helical transmembrane segment at I145 to V165 threads the bilayer. Residue A166 is a topological domain, periplasmic. A helical membrane pass occupies residues L167–L187. Over A188 to S226 the chain is Cytoplasmic. A helical membrane pass occupies residues L227–L247. The Periplasmic segment spans residues G248 to T256. Residues Y257 to V277 traverse the membrane as a helical segment. At T278–E280 the chain is on the cytoplasmic side. Residues T281–L301 traverse the membrane as a helical segment. At Q302 to E304 the chain is on the periplasmic side. Residues L305 to P325 form a helical membrane-spanning segment. Over L326 to A343 the chain is Cytoplasmic. Residues I344–L364 form a helical membrane-spanning segment. At A365–V366 the chain is on the periplasmic side. The helical transmembrane segment at M367 to I387 threads the bilayer. The Cytoplasmic segment spans residues T388–H397.

This sequence belongs to the major facilitator superfamily. LplT (TC 2.A.1.42) family.

The protein localises to the cell inner membrane. Its function is as follows. Catalyzes the facilitated diffusion of 2-acyl-glycero-3-phosphoethanolamine (2-acyl-GPE) into the cell. This is Lysophospholipid transporter LplT from Escherichia coli (strain SMS-3-5 / SECEC).